A 1770-amino-acid polypeptide reads, in one-letter code: Transposon Ty2-DR2 Gag-Pol polyprotein (1770 aa).

Polar residues-rich tracts occupy residues 1 to 39 (MESQ…SASN) and 49 to 60 (KVNSQEETTPGT). Disordered regions lie at residues 1–89 (MESQ…QQHG) and 360–449 (HSEY…SNDE). An RNA-binding region spans residues 295–397 (ENNINVSDRL…SSKPRAAKAH (103 aa)). The segment covering 369–381 (TSPNTTNTKVTTR) has biased composition (low complexity). Polar residues-rich tracts occupy residues 399 to 408 (IATSSKFSRV) and 415 to 435 (ESTV…GQQQ). The active-site For protease activity; shared with dimeric partner is Asp457. The interval 579-636 (NVNKSKSVNKYPYPLIHRMLGHANFRSIQKSLKKNAVTYLKESDIEWSNASTYQCPDC) is integrase-type zinc finger-like. Residues 656 to 831 (ESYEPFQYLH…AGLDITTILP (176 aa)) form the Integrase catalytic domain. Residues Asp667 and Asp732 each coordinate Mg(2+). Disordered regions lie at residues 1005–1038 (GGTI…MIDL), 1059–1135 (TEEP…KSSK), and 1171–1222 (SRQT…LEPP). 2 stretches are compositionally biased toward polar residues: residues 1009 to 1024 (ESDT…FTAR) and 1065 to 1082 (QRNS…STPS). Residues 1193 to 1227 (KKRSLEDNETEIEVSRDTWNNKNMRSLEPPRSKKR) carry the Bipartite nuclear localization signal motif. The region spanning 1353–1491 (NDYYITQLDI…DILGLEIKYQ (139 aa)) is the Reverse transcriptase Ty1/copia-type domain. The Mg(2+) site is built by Asp1361, Asp1442, Asp1443, Asp1625, Glu1667, and Asp1700. The RNase H Ty1/copia-type domain occupies 1625-1767 (DASYGNQPYY…IKTFKLLTNK (143 aa)).

In terms of assembly, the capsid protein forms a homotrimer, from which the VLPs are assembled. The protease is a homodimer, whose active site consists of two apposed aspartic acid residues. In terms of processing, initially, virus-like particles (VLPs) are composed of the structural unprocessed proteins Gag and Gag-Pol, and also contain the host initiator methionine tRNA (tRNA(i)-Met) which serves as a primer for minus-strand DNA synthesis, and a dimer of genomic Ty RNA. Processing of the polyproteins occurs within the particle and proceeds by an ordered pathway, called maturation. First, the protease (PR) is released by autocatalytic cleavage of the Gag-Pol polyprotein, and this cleavage is a prerequisite for subsequent processing at the remaining sites to release the mature structural and catalytic proteins. Maturation takes place prior to the RT reaction and is required to produce transposition-competent VLPs.

It is found in the cytoplasm. The protein localises to the nucleus. It catalyses the reaction DNA(n) + a 2'-deoxyribonucleoside 5'-triphosphate = DNA(n+1) + diphosphate. The catalysed reaction is Endonucleolytic cleavage to 5'-phosphomonoester.. Capsid protein (CA) is the structural component of the virus-like particle (VLP), forming the shell that encapsulates the retrotransposons dimeric RNA genome. The particles are assembled from trimer-clustered units and there are holes in the capsid shells that allow for the diffusion of macromolecules. CA also has nucleocapsid-like chaperone activity, promoting primer tRNA(i)-Met annealing to the multipartite primer-binding site (PBS), dimerization of Ty2 RNA and initiation of reverse transcription. In terms of biological role, the aspartyl protease (PR) mediates the proteolytic cleavages of the Gag and Gag-Pol polyproteins after assembly of the VLP. Functionally, reverse transcriptase/ribonuclease H (RT) is a multifunctional enzyme that catalyzes the conversion of the retro-elements RNA genome into dsDNA within the VLP. The enzyme displays a DNA polymerase activity that can copy either DNA or RNA templates, and a ribonuclease H (RNase H) activity that cleaves the RNA strand of RNA-DNA heteroduplexes during plus-strand synthesis and hydrolyzes RNA primers. The conversion leads to a linear dsDNA copy of the retrotransposon that includes long terminal repeats (LTRs) at both ends. Its function is as follows. Integrase (IN) targets the VLP to the nucleus, where a subparticle preintegration complex (PIC) containing at least integrase and the newly synthesized dsDNA copy of the retrotransposon must transit the nuclear membrane. Once in the nucleus, integrase performs the integration of the dsDNA into the host genome. The polypeptide is Transposon Ty2-DR2 Gag-Pol polyprotein (TY2B-DR2) (Saccharomyces cerevisiae (strain ATCC 204508 / S288c) (Baker's yeast)).